A 111-amino-acid chain; its full sequence is Cyclin-dependent protein kinase inhibitor SMR2 (111 aa).

The disordered stretch occupies residues 1–66; it reads MSKLLETLEE…PPPRKRPREI (66 aa). Basic and acidic residues predominate over residues 10-35; the sequence is EEKTVEQKPRSQEEEDHQDSSKKEEL.

In terms of assembly, interacts with CYCD2-1. Interacts with CDKB1-1. As to expression, expressed at low levels in roots and stems. Expressed in the root vascular tissue.

The protein resides in the nucleus. Its function is as follows. Cyclin-dependent protein kinase (CDK) inhibitor that restricts cell proliferation and cooperates with SIM and SMR1 to promote endoreplication during leaf development. This Arabidopsis thaliana (Mouse-ear cress) protein is Cyclin-dependent protein kinase inhibitor SMR2.